The primary structure comprises 654 residues: Endoplasmic reticulum chaperone BiP (654 aa).

An N-terminal signal peptide occupies residues 1-18 (MKFPMVAAALLLLCAVRA). The segment at 1 to 80 (MKFPMVAAAL…EGERLIGDAA (80 aa)) is required for interaction with ELAPOR1. Residue 36–39 (GTTY) coordinates ATP. S86 is modified (phosphoserine). ATP is bound at residue K96. Residue K125 is modified to N6-acetyllysine. Residues 125–280 (KPYIQVDIGG…KKKTGKDVRK (156 aa)) are nucleotide-binding (NBD). Y160 is subject to 3'-nitrotyrosine. K213 bears the N6-acetyllysine mark. 227–229 (GGT) contributes to the ATP binding site. K271 is subject to N6-acetyllysine. 293 to 300 (EKAKRALS) is a binding site for ATP. K326 carries the N6-acetyllysine modification. K352 participates in a covalent cross-link: Glycyl lysine isopeptide (Lys-Gly) (interchain with G-Cter in SUMO2). K353 is subject to N6-acetyllysine; alternate. Residue K353 forms a Glycyl lysine isopeptide (Lys-Gly) (interchain with G-Cter in SUMO1); alternate linkage. 364–367 (GSTR) serves as a coordination point for ATP. Residues 409–419 (QDTGDLVLLDV) are interdomain linker. A substrate-binding (SBD) region spans residues 420 to 500 (CPLTLGIETV…PRGVPQIEVT (81 aa)). K447 is modified (N6-succinyllysine). R492 bears the Omega-N-methylarginine mark. At T518 the chain carries O-AMP-threonine; alternate. At T518 the chain carries Phosphothreonine; alternate. The residue at position 585 (K585) is an N6,N6,N6-trimethyllysine; by METTL21A; in vitro. K585 is subject to N6,N6-dimethyllysine; alternate. Position 585 is an N6-methyllysine; alternate (K585). K591 carries the post-translational modification N6-methyllysine. A disordered region spans residues 632–654 (SKLYGSAGPPPTGEEDTSEKDEL). A phosphothreonine mark is found at T643 and T648. Positions 644–654 (GEEDTSEKDEL) are enriched in acidic residues. Residue S649 is modified to Phosphoserine. Positions 651-654 (KDEL) match the Prevents secretion from ER motif.

The protein belongs to the heat shock protein 70 family. In terms of assembly, monomer and homooligomer; homooligomerization via the interdomain linker inactivates the chaperone activity and acts as a storage of HSPA5/BiP molecules. Interacts with DNAJC1 (via J domain). Component of an EIF2 complex at least composed of CELF1/CUGBP1, CALR, CALR3, EIF2S1, EIF2S2, HSP90B1 and HSPA5. Part of a large chaperone multiprotein complex comprising DNAJB11, HSP90B1, HSPA5, HYOU, PDIA2, PDIA4, PDIA6, PPIB, SDF2L1, UGGT1 and very small amounts of ERP29, but not, or at very low levels, CALR nor CANX. Interacts with TMEM132A and TRIM21. May form a complex with ERLEC1, OS9, SEL1L and SYVN1. Interacts with DNAJC10. Interacts with DNAJB9/ERdj4; leading to recruit HSPA5/BiP to ERN1/IRE1. Interacts with ERN1/IRE1 (via luminal domain); the interaction takes place following interaction with DNAJB9/ERdj4 and leads to inactivate ERN1/IRE1, the interaction also competitively inhibits ERN1 interaction with MANF. Interacts directly with MANF (via SAP domain); the interaction inhibits ATP binding to HSPA5/BiP and subsequent nucleotide exchange. Interacts with EIF2AK3/PERK (via luminal domain); interaction leads to inactivate EIF2AK3/PERK. Interacts with MX1. Interacts with METTL23. Interacts with CEMIP; the interaction induces calcium leakage from the endoplasmic reticulum and cell migration. Interacts with PCSK4 form; the interaction takes place in the endoplasmic reticulum. Interacts with CIPC. Interacts with CCDC88B (via C-terminus); the interaction opposes ERN1-mediated JNK activation, protecting against apoptosis. Interacts with INPP5K; necessary for INPP5K localization at the endoplasmic reticulum. Interacts with LOXL2; leading to activate the ERN1/IRE1-XBP1 pathway of the unfolded protein response. Interacts with CLU under stressed condition; interaction increases CLU protein stability; facilitates its retrotranslocation and redistribution to the mitochondria; cooperatively suppress stress-induced apoptosis by stabilizing mitochondrial membrane integrity. Interacts with CCDC47. Interacts with CLN3. Interacts with ELAPOR1; may regulate the function of HSPA5 in apoptosis and cell proliferation. Interacts with CASP7. Interacts with ILDR2; the interaction stabilizes ILDR2 expression. Interacts with ADAM7. In unstressed cells, AMPylation at Thr-518 by FICD inactivates the chaperome activity: AMPylated form is locked in a relatively inert state and only weakly stimulated by J domain-containing proteins. In response to endoplasmic reticulum stress, de-AMPylation by the same protein, FICD, restores the chaperone activity.

It is found in the endoplasmic reticulum lumen. The protein resides in the melanosome. It localises to the cytoplasm. The protein localises to the cell surface. It carries out the reaction ATP + H2O = ADP + phosphate + H(+). The chaperone activity is regulated by ATP-induced allosteric coupling of the nucleotide-binding (NBD) and substrate-binding (SBD) domains. In the ADP-bound and nucleotide-free (apo) states, the two domains have little interaction. In contrast, in the ATP-bound state the two domains are tightly coupled, which results in drastically accelerated kinetics in both binding and release of polypeptide substrates. J domain-containing co-chaperones (DNAJB9/ERdj4 or DNAJC10/ERdj5) stimulate the ATPase activity and are required for efficient substrate recognition by HSPA5/BiP. Homooligomerization inactivates participating HSPA5/BiP protomers and probably act as reservoirs to store HSPA5/BiP molecules when they are not needed by the cell. In terms of biological role, endoplasmic reticulum chaperone that plays a key role in protein folding and quality control in the endoplasmic reticulum lumen. Involved in the correct folding of proteins and degradation of misfolded proteins via its interaction with DNAJC10/ERdj5, probably to facilitate the release of DNAJC10/ERdj5 from its substrate. Acts as a key repressor of the EIF2AK3/PERK and ERN1/IRE1-mediated unfolded protein response (UPR). In the unstressed endoplasmic reticulum, recruited by DNAJB9/ERdj4 to the luminal region of ERN1/IRE1, leading to disrupt the dimerization of ERN1/IRE1, thereby inactivating ERN1/IRE1. Also binds and inactivates EIF2AK3/PERK in unstressed cells. Accumulation of misfolded protein in the endoplasmic reticulum causes release of HSPA5/BiP from ERN1/IRE1 and EIF2AK3/PERK, allowing their homodimerization and subsequent activation. Plays an auxiliary role in post-translational transport of small presecretory proteins across endoplasmic reticulum (ER). May function as an allosteric modulator for SEC61 channel-forming translocon complex, likely cooperating with SEC62 to enable the productive insertion of these precursors into SEC61 channel. Appears to specifically regulate translocation of precursors having inhibitory residues in their mature region that weaken channel gating. May also play a role in apoptosis and cell proliferation. This is Endoplasmic reticulum chaperone BiP from Cricetulus griseus (Chinese hamster).